Consider the following 104-residue polypeptide: Large ribosomal subunit protein uL24 (104 aa).

It belongs to the universal ribosomal protein uL24 family. In terms of assembly, part of the 50S ribosomal subunit.

One of two assembly initiator proteins, it binds directly to the 5'-end of the 23S rRNA, where it nucleates assembly of the 50S subunit. In terms of biological role, one of the proteins that surrounds the polypeptide exit tunnel on the outside of the subunit. The polypeptide is Large ribosomal subunit protein uL24 (Corynebacterium aurimucosum (strain ATCC 700975 / DSM 44827 / CIP 107346 / CN-1) (Corynebacterium nigricans)).